A 384-amino-acid polypeptide reads, in one-letter code: uncharacterized protein (384 aa).

The protein to S.pombe SpAC2E11.17.

This is an uncharacterized protein from Schizosaccharomyces pombe (strain 972 / ATCC 24843) (Fission yeast).